A 673-amino-acid polypeptide reads, in one-letter code: UvrABC system protein B (673 aa).

A Helicase ATP-binding domain is found at 29-188 (EGLNDGLAHQ…LAELQYTRND (160 aa)). 42–49 (GVTGSGKT) contacts ATP. Residues 95-118 (YYDYYQPEAYVPSSDTFIEKDASI) carry the Beta-hairpin motif. The region spanning 434 to 600 (QVDDVLSEIH…ALNKKVGELL (167 aa)) is the Helicase C-terminal domain. Positions 607-632 (KPKRGKQAVKVEEKSANTYKPKSRKE) are disordered. One can recognise a UVR domain in the interval 634–669 (EKELKQLEQQMRDFAKDLEFEKAAAVRDKIGQLKAV).

The protein belongs to the UvrB family. Forms a heterotetramer with UvrA during the search for lesions. Interacts with UvrC in an incision complex.

The protein resides in the cytoplasm. Functionally, the UvrABC repair system catalyzes the recognition and processing of DNA lesions. A damage recognition complex composed of 2 UvrA and 2 UvrB subunits scans DNA for abnormalities. Upon binding of the UvrA(2)B(2) complex to a putative damaged site, the DNA wraps around one UvrB monomer. DNA wrap is dependent on ATP binding by UvrB and probably causes local melting of the DNA helix, facilitating insertion of UvrB beta-hairpin between the DNA strands. Then UvrB probes one DNA strand for the presence of a lesion. If a lesion is found the UvrA subunits dissociate and the UvrB-DNA preincision complex is formed. This complex is subsequently bound by UvrC and the second UvrB is released. If no lesion is found, the DNA wraps around the other UvrB subunit that will check the other stand for damage. This Actinobacillus pleuropneumoniae serotype 5b (strain L20) protein is UvrABC system protein B.